Here is a 124-residue protein sequence, read N- to C-terminus: uncharacterized protein (124 aa).

The disordered stretch occupies residues 1 to 65 (MAENSRYVRL…RPASSSNPDY (65 aa)). Positions 37–47 (LNSNDAESQQV) are enriched in polar residues.

This is an uncharacterized protein from Microplitis demolitor (Parasitoid wasp).